Here is a 735-residue protein sequence, read N- to C-terminus: Rho GTPase-activating protein SYDE1 (735 aa).

Disordered regions lie at residues 1 to 253, 601 to 655, and 669 to 706; these read MAEP…PYEV, PDTR…AGDW, and FLSGPDYDHVTGSDSEEDEDESGEPRGTTDFEDEFDAP. The segment covering 14-47 has biased composition (basic and acidic residues); sequence RGREKLPRKKSDAKDRGRPAQRSEPKPPEPEPRV. Residues 151–160 are compositionally biased toward low complexity; it reads PTKTSRTKSP. A phosphoserine mark is found at Ser224, Ser231, Ser235, and Ser244. Residues 249 to 366 enclose the C2 domain; the sequence is RPYEVGPSAR…FRGCQAQQLA (118 aa). In terms of domain architecture, Rho-GAP spans 398-604; the sequence is LPLQLLVERE…YLLQSWPDTR (207 aa). Over residues 669-679 the composition is skewed to basic and acidic residues; it reads FLSGPDYDHVT. Phosphoserine occurs at positions 681 and 683.

Palmitoylated. Probably palmitoylated by ZDHHC3 and ZDHHC7.

Its function is as follows. GTPase activator for the Rho-type GTPases. As a GCM1 downstream effector, it is involved in placental development and positively regulates trophoblast cells migration. It regulates cytoskeletal remodeling by controlling the activity of Rho GTPases including RHOA, CDC42 and RAC1. This chain is Rho GTPase-activating protein SYDE1 (Syde1), found in Rattus norvegicus (Rat).